Reading from the N-terminus, the 364-residue chain is Aromatic prenyltransferase (364 aa).

Residues 1-22 form the signal peptide; that stretch reads MDRNQWTLALMALMRFAHRAFI. Asn-142 and Asn-337 each carry an N-linked (GlcNAc...) asparagine glycan.

The protein belongs to the aromatic prenyltransferase family.

In terms of biological role, prenyltransferase that attaches isoprenoid moieties to carbon atoms of aromatic substrates in an enzyme-catalyzed Friedel-Crafts reaction. This is Aromatic prenyltransferase from Talaromyces marneffei (strain ATCC 18224 / CBS 334.59 / QM 7333) (Penicillium marneffei).